The sequence spans 374 residues: Glutamine synthetase (374 aa).

The interval 2-25 (TTSASSHLNKGIKQVYMSLPQGEK) is required for glutamine-induced ubiquitination by CRL4(CRBN) and proteasomal degradation. Lys11 and Lys14 each carry N6-acetyllysine. The GS beta-grasp domain occupies 24–106 (EKVQAMYIWI…VLCESFQVQF (83 aa)). The GS catalytic domain occupies 114–374 (LRHTCKRIMD…TGDEPFQYKN (261 aa)). Glu135 is an ATP binding site. Glu135, Glu137, Glu197, and Glu204 together coordinate Mn(2+). 204–209 (EFQIGP) serves as a coordination point for ATP. L-glutamate is bound at residue 247–248 (NW). His254 is a Mn(2+) binding site. ATP is bound by residues 256 to 258 (NFS), Arg320, and Arg325. Residue Arg320 coordinates L-glutamate. Residue 337–339 (YFE) participates in ADP binding. Mn(2+) is bound at residue Glu339. Arg341 is a binding site for L-glutamate. Ser344 is modified (phosphoserine).

This sequence belongs to the glutamine synthetase family. As to quaternary structure, decamer; composed of two pentamers. Interacts with PALMD. Interacts with RHOJ. Interacts with BEST2; this interaction tethers a fraction of GLUL to the membrane, causing a decrease of cytosolic glutamine synthase (GS) activity and inhibits the chloride channel activity of BEST2 by affecting the gating at the aperture in the absence of intracellular glutamate. Requires Mg(2+) as cofactor. It depends on Mn(2+) as a cofactor. In terms of processing, palmitoylated; undergoes autopalmitoylation. Post-translationally, acetylated by EP300/p300; acetylation is stimulated by increased glutamine levels and promotes ubiquitin-mediated proteasomal degradation. Ubiquitinated by ZNRF1. Ubiquitinated by the DCX (DDB1-CUL4-X-box) E3 ubiquitin-protein ligase complex called CRL4(CRBN), leading to proteasomal degradation.

It localises to the cytoplasm. The protein localises to the cytosol. It is found in the microsome. The protein resides in the mitochondrion. Its subcellular location is the cell membrane. It catalyses the reaction L-glutamate + NH4(+) + ATP = L-glutamine + ADP + phosphate + H(+). The enzyme catalyses L-cysteinyl-[protein] + hexadecanoyl-CoA = S-hexadecanoyl-L-cysteinyl-[protein] + CoA. With respect to regulation, glutamine synthetase activity is inhibited by methionine sulfoximine (MSO). Functionally, glutamine synthetase that catalyzes the ATP-dependent conversion of glutamate and ammonia to glutamine. Its role depends on tissue localization: in the brain, it regulates the levels of toxic ammonia and converts neurotoxic glutamate to harmless glutamine, whereas in the liver, it is one of the enzymes responsible for the removal of ammonia. Plays a key role in ammonium detoxification during erythropoiesis: the glutamine synthetase activity is required to remove ammonium generated by porphobilinogen deaminase (HMBS) during heme biosynthesis to prevent ammonium accumulation and oxidative stress. Essential for proliferation of fetal skin fibroblasts. Independently of its glutamine synthetase activity, required for endothelial cell migration during vascular development. Involved in angiogenesis by regulating membrane localization and activation of the GTPase RHOJ, possibly by promoting RHOJ palmitoylation. May act as a palmitoyltransferase for RHOJ: able to autopalmitoylate and then transfer the palmitoyl group to RHOJ. Plays a role in ribosomal 40S subunit biogenesis. Through the interaction with BEST2, inhibits BEST2 channel activity by affecting the gating at the aperture in the absence of intracellular L-glutamate, but sensitizes BEST2 to intracellular L-glutamate, which promotes the opening of BEST2 and thus relieves its inhibitory effect on BEST2. This Macaca fascicularis (Crab-eating macaque) protein is Glutamine synthetase.